A 236-amino-acid polypeptide reads, in one-letter code: Orotidine 5'-phosphate decarboxylase (236 aa).

Substrate-binding positions include D17, K39, 66–75 (DLKFHDIPNT), T125, R186, Q195, G215, and R216. Residue K68 is the Proton donor of the active site.

The protein belongs to the OMP decarboxylase family. Type 1 subfamily. Homodimer.

The enzyme catalyses orotidine 5'-phosphate + H(+) = UMP + CO2. It participates in pyrimidine metabolism; UMP biosynthesis via de novo pathway; UMP from orotate: step 2/2. Functionally, catalyzes the decarboxylation of orotidine 5'-monophosphate (OMP) to uridine 5'-monophosphate (UMP). In Buchnera aphidicola subsp. Schizaphis graminum (strain Sg), this protein is Orotidine 5'-phosphate decarboxylase.